Consider the following 330-residue polypeptide: Beta-hexosaminidase (330 aa).

Substrate is bound by residues Asp62, Arg70, Arg130, and 160–161 (KH). The Proton donor/acceptor role is filled by His173. The active-site Nucleophile is Asp242.

Belongs to the glycosyl hydrolase 3 family. NagZ subfamily. As to quaternary structure, monomer.

Its subcellular location is the cytoplasm. It catalyses the reaction Hydrolysis of terminal non-reducing N-acetyl-D-hexosamine residues in N-acetyl-beta-D-hexosaminides.. It participates in cell wall biogenesis; peptidoglycan recycling. In terms of biological role, plays a role in peptidoglycan recycling by cleaving the terminal beta-1,4-linked N-acetylglucosamine (GlcNAc) from peptide-linked peptidoglycan fragments, giving rise to free GlcNAc, anhydro-N-acetylmuramic acid and anhydro-N-acetylmuramic acid-linked peptides. Plays a role in beta-lactam antibiotic resistance via its role in generating anhydro-N-acetylmuramic acid-linked peptides; these peptides function as signaling molecules that induce high-level expression of the beta-lactamase AmpC. In Vibrio cholerae serotype O1 (strain ATCC 39315 / El Tor Inaba N16961), this protein is Beta-hexosaminidase.